We begin with the raw amino-acid sequence, 471 residues long: Tryptophanase (471 aa).

Lys-5, Lys-115, and Lys-156 each carry N6-acetyllysine. Lys-270 is subject to N6-(pyridoxal phosphate)lysine. Position 450 is an N6-acetyllysine (Lys-450).

Belongs to the beta-eliminating lyase family. In terms of assembly, homotetramer. Pyridoxal 5'-phosphate serves as cofactor.

It carries out the reaction L-tryptophan + H2O = indole + pyruvate + NH4(+). It functions in the pathway amino-acid degradation; L-tryptophan degradation via pyruvate pathway; indole and pyruvate from L-tryptophan: step 1/1. This is Tryptophanase from Escherichia coli (strain SMS-3-5 / SECEC).